The chain runs to 1147 residues: Putative ATP-dependent RNA helicase L377 (1147 aa).

One can recognise a Helicase ATP-binding domain in the interval 108–315; that stretch reads INPNTPYRGL…VELINYLRPK (208 aa). ATP is bound at residue 121 to 128; sequence WGTGVGKS. The DEAH box motif lies at 264–267; sequence DEAH.

The protein belongs to the DEAD box helicase family. DEAH subfamily.

The protein resides in the virion. It catalyses the reaction ATP + H2O = ADP + phosphate + H(+). This chain is Putative ATP-dependent RNA helicase L377, found in Acanthamoeba polyphaga (Amoeba).